The primary structure comprises 447 residues: Phosphoglucosamine mutase (447 aa).

Ser-101 (phosphoserine intermediate) is an active-site residue. Residues Ser-101, Asp-242, Asp-244, and Asp-246 each coordinate Mg(2+). Ser-101 carries the phosphoserine modification.

This sequence belongs to the phosphohexose mutase family. Requires Mg(2+) as cofactor. Post-translationally, activated by phosphorylation.

The catalysed reaction is alpha-D-glucosamine 1-phosphate = D-glucosamine 6-phosphate. In terms of biological role, catalyzes the conversion of glucosamine-6-phosphate to glucosamine-1-phosphate. The chain is Phosphoglucosamine mutase from Bradyrhizobium diazoefficiens (strain JCM 10833 / BCRC 13528 / IAM 13628 / NBRC 14792 / USDA 110).